We begin with the raw amino-acid sequence, 872 residues long: Alanine--tRNA ligase (872 aa).

Zn(2+)-binding residues include His-566, His-570, Cys-668, and His-672.

This sequence belongs to the class-II aminoacyl-tRNA synthetase family. Zn(2+) serves as cofactor.

The protein localises to the cytoplasm. The enzyme catalyses tRNA(Ala) + L-alanine + ATP = L-alanyl-tRNA(Ala) + AMP + diphosphate. Its function is as follows. Catalyzes the attachment of alanine to tRNA(Ala) in a two-step reaction: alanine is first activated by ATP to form Ala-AMP and then transferred to the acceptor end of tRNA(Ala). Also edits incorrectly charged Ser-tRNA(Ala) and Gly-tRNA(Ala) via its editing domain. This chain is Alanine--tRNA ligase, found in Lactococcus lactis subsp. lactis (strain IL1403) (Streptococcus lactis).